The primary structure comprises 466 residues: Teichoic acids export ATP-binding protein TagH (466 aa).

Positions 27–249 (NKAKSLIGSN…YEKFVQWFKK (223 aa)) constitute an ABC transporter domain. 63-70 (GLNGAGKS) serves as a coordination point for ATP. The segment at 250–466 (LPKKEQEKFK…TTEQSDGANQ (217 aa)) is unknown. Disordered stretches follow at residues 356–403 (NMTS…SNQN) and 439–466 (IHPG…GANQ). Over residues 373 to 384 (PKKKVSQAKKTT) the composition is skewed to basic residues. Positions 385–403 (KVSSTQKNTSSSSSTSNQN) are enriched in low complexity. The LysM domain occupies 403–447 (NTYIVQAGDSLSIIAENHGYSVEEIQQVNPGVDFSVIHPGQEINL). Residues 449-466 (EPTTSANSTTEQSDGANQ) are compositionally biased toward polar residues.

It belongs to the ABC transporter superfamily. Teichoic acids exporter (TC 3.A.1.104.1) family. In terms of assembly, the complex is composed of two ATP-binding proteins (TagH) and two transmembrane proteins (TagG).

Its subcellular location is the cell membrane. It carries out the reaction ATP + H2O + teichoic acidSide 1 = ADP + phosphate + teichoic acidSide 2.. Part of the ABC transporter complex TagGH involved in teichoic acids export. Responsible for energy coupling to the transport system. This Lactococcus lactis subsp. lactis (strain IL1403) (Streptococcus lactis) protein is Teichoic acids export ATP-binding protein TagH.